The following is a 364-amino-acid chain: DNA polymerase IV (364 aa).

A UmuC domain is found at 14 to 198 (IIHIDMDAFF…LPIEKFHGVG (185 aa)). Mg(2+) contacts are provided by aspartate 18 and aspartate 116. Glutamate 117 is a catalytic residue.

This sequence belongs to the DNA polymerase type-Y family. In terms of assembly, monomer. The cofactor is Mg(2+).

The protein resides in the cytoplasm. The enzyme catalyses DNA(n) + a 2'-deoxyribonucleoside 5'-triphosphate = DNA(n+1) + diphosphate. Its function is as follows. Poorly processive, error-prone DNA polymerase involved in untargeted mutagenesis. Copies undamaged DNA at stalled replication forks, which arise in vivo from mismatched or misaligned primer ends. These misaligned primers can be extended by PolIV. Exhibits no 3'-5' exonuclease (proofreading) activity. May be involved in translesional synthesis, in conjunction with the beta clamp from PolIII. This is DNA polymerase IV from Streptococcus agalactiae serotype Ia (strain ATCC 27591 / A909 / CDC SS700).